A 272-amino-acid polypeptide reads, in one-letter code: Digeranylgeranylglyceryl phosphate synthase (272 aa).

Transmembrane regions (helical) follow at residues 16-36 (AFIA…EIIL), 79-99 (ALYY…IISL), 100-120 (ENGI…YDLK), 124-144 (FIGN…GGLI), 148-168 (VNLG…REII), 194-214 (AVML…LLYY), 217-237 (IFSI…VYSA), and 252-272 (ISKY…MGAL).

This sequence belongs to the UbiA prenyltransferase family. DGGGP synthase subfamily. Requires Mg(2+) as cofactor.

The protein localises to the cell membrane. The catalysed reaction is sn-3-O-(geranylgeranyl)glycerol 1-phosphate + (2E,6E,10E)-geranylgeranyl diphosphate = 2,3-bis-O-(geranylgeranyl)-sn-glycerol 1-phosphate + diphosphate. It participates in membrane lipid metabolism; glycerophospholipid metabolism. Its function is as follows. Prenyltransferase that catalyzes the transfer of the geranylgeranyl moiety of geranylgeranyl diphosphate (GGPP) to the C2 hydroxyl of (S)-3-O-geranylgeranylglyceryl phosphate (GGGP). This reaction is the second ether-bond-formation step in the biosynthesis of archaeal membrane lipids. This Methanosphaera stadtmanae (strain ATCC 43021 / DSM 3091 / JCM 11832 / MCB-3) protein is Digeranylgeranylglyceryl phosphate synthase.